Here is a 143-residue protein sequence, read N- to C-terminus: D-aminoacyl-tRNA deacylase (143 aa).

The Gly-cisPro motif, important for rejection of L-amino acids signature appears at 135–136 (GP).

This sequence belongs to the DTD family. In terms of assembly, homodimer.

It is found in the cytoplasm. The enzyme catalyses glycyl-tRNA(Ala) + H2O = tRNA(Ala) + glycine + H(+). It catalyses the reaction a D-aminoacyl-tRNA + H2O = a tRNA + a D-alpha-amino acid + H(+). An aminoacyl-tRNA editing enzyme that deacylates mischarged D-aminoacyl-tRNAs. Also deacylates mischarged glycyl-tRNA(Ala), protecting cells against glycine mischarging by AlaRS. Acts via tRNA-based rather than protein-based catalysis; rejects L-amino acids rather than detecting D-amino acids in the active site. By recycling D-aminoacyl-tRNA to D-amino acids and free tRNA molecules, this enzyme counteracts the toxicity associated with the formation of D-aminoacyl-tRNA entities in vivo and helps enforce protein L-homochirality. The polypeptide is D-aminoacyl-tRNA deacylase (Mycobacterium bovis (strain BCG / Pasteur 1173P2)).